The chain runs to 296 residues: 1,2-beta-oligomannan phosphorylase (296 aa).

Belongs to the glycosyl hydrolase 130 family. Homodimer.

It carries out the reaction [(1-&gt;2)-beta-D-mannosyl](n) + phosphate = [(1-&gt;2)-beta-D-mannosyl](n-1) + alpha-D-mannose 1-phosphate. Its pathway is nucleotide-sugar biosynthesis; GDP-alpha-D-mannose biosynthesis. Probably involved in a salvage pathway for GDP-D-mannose biosynthesis. Catalyzes the reversible phosphorolysis of 1,2-beta-oligomannan. In phosphorolytic reactions, prefers 1,2-beta-oligomannan with a degree of polymerization (DP) of 3, 4 and 5. Produces alpha-D-mannose 1-phosphate, which is the precursor of GDP-D-mannose. The chain is 1,2-beta-oligomannan phosphorylase from Thermoanaerobacter sp. (strain X514).